A 351-amino-acid chain; its full sequence is Phosphoribosylformylglycinamidine cyclo-ligase (351 aa).

This sequence belongs to the AIR synthase family.

The protein resides in the cytoplasm. The catalysed reaction is 2-formamido-N(1)-(5-O-phospho-beta-D-ribosyl)acetamidine + ATP = 5-amino-1-(5-phospho-beta-D-ribosyl)imidazole + ADP + phosphate + H(+). It functions in the pathway purine metabolism; IMP biosynthesis via de novo pathway; 5-amino-1-(5-phospho-D-ribosyl)imidazole from N(2)-formyl-N(1)-(5-phospho-D-ribosyl)glycinamide: step 2/2. The protein is Phosphoribosylformylglycinamidine cyclo-ligase of Xylella fastidiosa (strain 9a5c).